Consider the following 55-residue polypeptide: Large ribosomal subunit protein bL33 (55 aa).

The protein belongs to the bacterial ribosomal protein bL33 family.

The polypeptide is Large ribosomal subunit protein bL33 (Rhodospirillum centenum (strain ATCC 51521 / SW)).